Consider the following 117-residue polypeptide: Probable non-functional immunoglobulin heavy variable 3-16 (117 aa).

A signal peptide spans 1–19 (MEFGLSWVFLAGILKGVQC). The tract at residues 20–44 (EVQLVESGGGLVQPGGSLRLSCAAS) is framework-1. Positions 21 to 117 (VQLVESGGGL…EDMAVYYCVR (97 aa)) constitute an Ig-like domain. A disulfide bond links Cys-41 and Cys-115. Residues 45–52 (GFTFSNSD) are complementarity-determining-1. The tract at residues 53–69 (MNWARKAPGKGLEWVSG) is framework-2. Positions 70–77 (VSWNGSRT) are complementarity-determining-2. Asn-73 carries an N-linked (GlcNAc...) asparagine glycan. A framework-3 region spans residues 78 to 115 (HYVDSVKRRFIISRDNSRNSLYLQKNRRRAEDMAVYYC). The complementarity-determining-3 stretch occupies residues 116–117 (VR).

In terms of assembly, immunoglobulins are composed of two identical heavy chains and two identical light chains; disulfide-linked.

It localises to the secreted. The protein resides in the cell membrane. Probable non-functional open reading frame (ORF) of V region of the variable domain of immunoglobulin heavy chains. Non-functional ORF generally cannot participate in the synthesis of a productive immunoglobulin chain due to altered V-(D)-J or switch recombination and/or splicing site (at mRNA level) and/or conserved amino acid change (protein level). Immunoglobulins, also known as antibodies, are membrane-bound or secreted glycoproteins produced by B lymphocytes. In the recognition phase of humoral immunity, the membrane-bound immunoglobulins serve as receptors which, upon binding of a specific antigen, trigger the clonal expansion and differentiation of B lymphocytes into immunoglobulins-secreting plasma cells. Secreted immunoglobulins mediate the effector phase of humoral immunity, which results in the elimination of bound antigens. The antigen binding site is formed by the variable domain of one heavy chain, together with that of its associated light chain. Thus, each immunoglobulin has two antigen binding sites with remarkable affinity for a particular antigen. The variable domains are assembled by a process called V-(D)-J rearrangement and can then be subjected to somatic hypermutations which, after exposure to antigen and selection, allow affinity maturation for a particular antigen. The protein is Probable non-functional immunoglobulin heavy variable 3-16 of Homo sapiens (Human).